A 440-amino-acid chain; its full sequence is MRRYLRVVVLCVACGFCSLLYAFSQLAVSLEEGTGGGGGKPQAAVASWLAGGGRGAVRGAGVAGPAAHPGVSDRCKDFSLCYWNPYWMLPSDVCGMNCFWEAAFRYSLKIQPVEKMHLAVVACGERLEETMTMLKSAIIFSIKPLQFHIFAEDQLHHSFKGRLDNWSFLQTFNYTLYPITFPSENAAEWKKLFKPCASQRLFLPLILKEVDSLLYVDTDILFLRPVDDIWSLLKKFNSTQIAAMAPEHEEPRIGWYNRFARHPYYGKTGVNSGVMLMNMTRMRRKYFKNDMTTVRLQWGDILMPLLKKYKLNITWGDQDLLNIVFFHNPESLFVFPCQWNYRPDHCIYGSNCQEAEEGGIFILHGNRGVYHDDKQPAFRAVYEALRNCSFEDDNIRSLLKPLELELQKTVHTYCGKIYKIFIKQLAKSVRDRYARSPKEK.

The Cytoplasmic segment spans residues 1–6; the sequence is MRRYLR. A helical; Signal-anchor for type II membrane protein membrane pass occupies residues 7–29; the sequence is VVVLCVACGFCSLLYAFSQLAVS. Residues 30-440 lie on the Lumenal side of the membrane; sequence LEEGTGGGGG…DRYARSPKEK (411 aa). N-linked (GlcNAc...) asparagine glycosylation is found at Asn-173, Asn-237, and Asn-278.

The protein belongs to the glycosyltransferase 8 family.

It localises to the membrane. The catalysed reaction is 3-O-(beta-D-glucosyl)-L-seryl-[EGF-like domain protein] + UDP-alpha-D-xylose = 3-O-[alpha-D-xylosyl-(1-&gt;3)-beta-D-glucosyl]-L-seryl-[EGF-like domain protein] + UDP + H(+). Glycosyltransferase which elongates the O-linked glucose attached to EGF-like repeats in the extracellular domain of Notch proteins by catalyzing the addition of xylose. This chain is Glucoside xylosyltransferase 1 (GXYLT1), found in Homo sapiens (Human).